The sequence spans 414 residues: Cyclohex-1-ene-1-carbonyl-CoA dehydrogenase (414 aa).

The Proton acceptor role is filled by aspartate 124. Residues alanine 157, threonine 158, serine 164, and threonine 190 each coordinate FAD. Serine 164 is a binding site for cyclohex-1-ene-1-carbonyl-CoA. A cyclohexa-1,5-diene-1-carbonyl-CoA-binding site is contributed by serine 164. Residues lysine 211, arginine 275, and threonine 396 each contribute to the cyclohex-1-ene-1-carbonyl-CoA site. Lysine 211, arginine 275, and threonine 396 together coordinate cyclohexa-1,5-diene-1-carbonyl-CoA. FAD contacts are provided by threonine 398 and glutamine 400. Arginine 408 contributes to the cyclohex-1-ene-1-carbonyl-CoA binding site. Arginine 408 lines the cyclohexa-1,5-diene-1-carbonyl-CoA pocket.

It belongs to the acyl-CoA dehydrogenase family. In terms of assembly, homotetramer. FAD is required as a cofactor.

It catalyses the reaction cyclohex-1-ene-1-carbonyl-CoA + oxidized [electron-transfer flavoprotein] + H(+) = cyclohexa-1,5-diene-1-carbonyl-CoA + reduced [electron-transfer flavoprotein]. In terms of biological role, mediates the conversion of cyclohex-1-ene-1-carbonyl-CoA (Ch1CoA) into (E)-2-cyclohex-1,5-diene-1-carbonyl-CoA in biosynthesis of cyclohexane-1-carboxylate, a by-product produced during fermentation of benzoate and crotonate to acetate. Also able to further convert (E)-2-cyclohex-1,5-diene-1-carbonyl-CoA to benzoyl-CoA. The protein is Cyclohex-1-ene-1-carbonyl-CoA dehydrogenase of Syntrophus aciditrophicus (strain SB).